A 278-amino-acid chain; its full sequence is uncharacterized protein (278 aa).

Residues 127–151 are compositionally biased toward pro residues; it reads PPTPSPPPPPAPTQPTRPTPGPAFF. The tract at residues 127-174 is disordered; that stretch reads PPTPSPPPPPAPTQPTRPTPGPAFFPQPFKVELHHPTPKTSSLPAPSL. Residues 164–174 are compositionally biased toward low complexity; it reads PKTSSLPAPSL.

This is an uncharacterized protein from Botryotinia fuckeliana (Noble rot fungus).